Here is a 337-residue protein sequence, read N- to C-terminus: Glyceraldehyde-3-phosphate dehydrogenase (337 aa).

NAD(+) is bound by residues 12-13 (RI), Asp34, and Arg79. D-glyceraldehyde 3-phosphate is bound by residues 150-152 (SCT), Thr181, 210-211 (TG), and Arg233. Cys151 serves as the catalytic Nucleophile. Residue Asn315 participates in NAD(+) binding.

It belongs to the glyceraldehyde-3-phosphate dehydrogenase family. As to quaternary structure, homotetramer.

It is found in the cytoplasm. It catalyses the reaction D-glyceraldehyde 3-phosphate + phosphate + NAD(+) = (2R)-3-phospho-glyceroyl phosphate + NADH + H(+). Its pathway is carbohydrate degradation; glycolysis; pyruvate from D-glyceraldehyde 3-phosphate: step 1/5. This is Glyceraldehyde-3-phosphate dehydrogenase (GPD) from Coccidioides posadasii (strain C735) (Valley fever fungus).